The primary structure comprises 438 residues: UDP-N-acetylmuramoylalanine--D-glutamate ligase (438 aa).

105–111 (GSNGKTT) serves as a coordination point for ATP.

It belongs to the MurCDEF family.

It localises to the cytoplasm. The enzyme catalyses UDP-N-acetyl-alpha-D-muramoyl-L-alanine + D-glutamate + ATP = UDP-N-acetyl-alpha-D-muramoyl-L-alanyl-D-glutamate + ADP + phosphate + H(+). It participates in cell wall biogenesis; peptidoglycan biosynthesis. Cell wall formation. Catalyzes the addition of glutamate to the nucleotide precursor UDP-N-acetylmuramoyl-L-alanine (UMA). The polypeptide is UDP-N-acetylmuramoylalanine--D-glutamate ligase (Oenococcus oeni (strain ATCC BAA-331 / PSU-1)).